The sequence spans 202 residues: dTTP/UTP pyrophosphatase (202 aa).

Asp76 serves as the catalytic Proton acceptor.

Belongs to the Maf family. YhdE subfamily. The cofactor is a divalent metal cation.

Its subcellular location is the cytoplasm. It catalyses the reaction dTTP + H2O = dTMP + diphosphate + H(+). The enzyme catalyses UTP + H2O = UMP + diphosphate + H(+). Functionally, nucleoside triphosphate pyrophosphatase that hydrolyzes dTTP and UTP. May have a dual role in cell division arrest and in preventing the incorporation of modified nucleotides into cellular nucleic acids. This Neisseria gonorrhoeae (strain ATCC 700825 / FA 1090) protein is dTTP/UTP pyrophosphatase.